The primary structure comprises 254 residues: MRRVRYFLLALLVAILAALAGGYYWLHSGNPDALRKIVLQQCVPHQQQQQNPSPCAEVNLKGGYVLFKDRNGPLQYLLMPTYRINGTESPLLLDPLTPNFFWQAWQGREIMSQRHGAPVPDNAISLAINSRSGRTQNHFHIHISCLRPDVRAQLDKDAAAVSSRWLPLPGGLQGHEYLARRVTEAELAQRSPFLMLAEEVPEAREHMGRFALAMAQQSDGSLVLLATERNLLTLNRASAEEIQDHRCAILNANH.

The chain crosses the membrane as a helical span at residues 6–26 (YFLLALLVAILAALAGGYYWL).

The protein belongs to the Cdh family.

The protein resides in the cell inner membrane. It catalyses the reaction a CDP-1,2-diacyl-sn-glycerol + H2O = a 1,2-diacyl-sn-glycero-3-phosphate + CMP + 2 H(+). The protein operates within phospholipid metabolism; CDP-diacylglycerol degradation; phosphatidate from CDP-diacylglycerol: step 1/1. This is CDP-diacylglycerol pyrophosphatase from Klebsiella pneumoniae (strain 342).